A 581-amino-acid chain; its full sequence is mRNA-decapping enzyme 1B (581 aa).

Residue serine 145 is modified to Phosphoserine. 2 disordered regions span residues 181 to 222 and 236 to 258; these read QISS…PEPQ and APCQ…PEKF. Residues 204-219 are compositionally biased toward polar residues; sequence GSRQQRGPRPGQTSDP. A compositionally biased stretch (low complexity) spans 244-255; sequence PPQTLPLQQQQP. A phosphoserine mark is found at serine 269 and serine 326. Positions 349–411 are disordered; the sequence is AENRCEPGAP…HQPVTGPGEV (63 aa). Residues 355-367 show a composition bias toward low complexity; that stretch reads PGAPAPASSATTP. Position 366 is a phosphothreonine (threonine 366). The span at 368–381 shows a compositional bias: polar residues; that stretch reads VSLAQPTRLSSALP. Pro residues predominate over residues 382–401; it reads PQTPGPRALPRPAPPGPGPG. Phosphoserine is present on serine 412. Residues 427 to 468 form a disordered region; that stretch reads QQLPAPGRPALAAKFPTATLSTRARNPLEPWRDPPPSTEQPA. The residue at position 475 (serine 475) is a Phosphoserine. The segment at 498 to 522 is disordered; that stretch reads SWAPPQERSRAPLPPGNQDPAATPT.

The protein belongs to the DCP1 family. As to quaternary structure, interacts with DCP1A.

The protein localises to the cytoplasm. It localises to the nucleus. The enzyme catalyses a 5'-end (N(7)-methyl 5'-triphosphoguanosine)-ribonucleoside in mRNA + H2O = N(7)-methyl-GDP + a 5'-end phospho-ribonucleoside in mRNA + 2 H(+). May play a role in the degradation of mRNAs, both in normal mRNA turnover and in nonsense-mediated mRNA decay. May remove the 7-methyl guanine cap structure from mRNA molecules, yielding a 5'-phosphorylated mRNA fragment and 7m-GDP. This Bos taurus (Bovine) protein is mRNA-decapping enzyme 1B (DCP1B).